The primary structure comprises 382 residues: MAVLRPVDMRMQPAPYEGRMKVIHKILEQLQKYRPRKANLEGLAVQWEHEVAKRSSSKHGYMFNASLLLRDIARHKGNLNRQGRYEAPAPQVSKAEVLAALRNLVLSEQVLSENGYVTAQDALESAAEEKEGLETCVRCLKKFDVRDIMVPTQCQFHVLKEQYNKDMRTFQYRCCGEIGTSCTPFALGCKTLEHHVFRPCTYAAMSKLLPFRNTRGVEGETNVLALDCEMAYTSCGYELIRLTVVEFWTNAVLFDEIVQPLGEIIDLNTQFSGVHEIDRAVAKTFEEAREVFLSPAMINENSILIGHGLENDLNVLRIIHDKIIDTAILYPNGKFKSSLRNLAFQELSRRIQTGEHDSSEDAIAAMDVVKHKLGIPLDRKTW.

In terms of domain architecture, Exonuclease spans 223-369 (VLALDCEMAY…EDAIAAMDVV (147 aa)).

This sequence belongs to the REXO1/REXO3 family.

It is found in the cytoplasm. Its subcellular location is the nucleus. Its function is as follows. 3' to 5' exoribonuclease required for proper 3' end maturation of MRP RNA and of the U5L snRNA. In Eremothecium gossypii (strain ATCC 10895 / CBS 109.51 / FGSC 9923 / NRRL Y-1056) (Yeast), this protein is RNA exonuclease 3 (REX3).